A 264-amino-acid polypeptide reads, in one-letter code: uncharacterized protein (264 aa).

A run of 6 helical transmembrane segments spans residues 1–21 (MLLG…SVSL), 43–63 (FFGV…NGFV), 95–115 (VVGL…LSSL), 146–166 (IATW…LGGL), 181–201 (GWLA…QPFV), and 215–235 (IVAN…MFFP).

This sequence to M.pneumoniae MPN_308 C-terminal region.

Its subcellular location is the cell membrane. This is an uncharacterized protein from Mycoplasma pneumoniae (strain ATCC 29342 / M129 / Subtype 1) (Mycoplasmoides pneumoniae).